A 700-amino-acid polypeptide reads, in one-letter code: Acetyl-coenzyme A carboxylase carboxyl transferase subunit beta, chloroplastic (700 aa).

The Zn(2+) site is built by cysteine 34, cysteine 37, cysteine 53, and cysteine 56. Residues 34-56 (CENCETLIYKKSLLEQKGVCAEC) form a C4-type zinc finger. In terms of domain architecture, CoA carboxyltransferase N-terminal spans 445–700 (KKGRDTKDTE…ETIEIYMYGD (256 aa)).

It belongs to the AccD/PCCB family. As to quaternary structure, acetyl-CoA carboxylase is a heterohexamer composed of biotin carboxyl carrier protein, biotin carboxylase and 2 subunits each of ACCase subunit alpha and ACCase plastid-coded subunit beta (accD). Requires Zn(2+) as cofactor.

The protein localises to the plastid. It is found in the chloroplast stroma. The catalysed reaction is N(6)-carboxybiotinyl-L-lysyl-[protein] + acetyl-CoA = N(6)-biotinyl-L-lysyl-[protein] + malonyl-CoA. Its pathway is lipid metabolism; malonyl-CoA biosynthesis; malonyl-CoA from acetyl-CoA: step 1/1. In terms of biological role, component of the acetyl coenzyme A carboxylase (ACC) complex. Biotin carboxylase (BC) catalyzes the carboxylation of biotin on its carrier protein (BCCP) and then the CO(2) group is transferred by the transcarboxylase to acetyl-CoA to form malonyl-CoA. In Cryptomeria japonica (Japanese cedar), this protein is Acetyl-coenzyme A carboxylase carboxyl transferase subunit beta, chloroplastic.